The primary structure comprises 404 residues: UPF0261 protein CTC_01794 (404 aa).

Belongs to the UPF0261 family.

This Clostridium tetani (strain Massachusetts / E88) protein is UPF0261 protein CTC_01794.